The chain runs to 472 residues: Tryptophan--tRNA ligase, cytoplasmic (472 aa).

In terms of domain architecture, WHEP-TRS spans 9–65 (SPLELFNSIATQGELVRSLKAGNASKDEIDSAVKMLLSLKMSYKAAMGEDYKANCPP). K155 carries the post-translational modification N6-succinyllysine. The 'HIGH' region signature appears at 165–174 (PSSEAMHVGH). The short motif at 350–354 (KMSAS) is the 'KMSKS' region element. A Phosphoserine modification is found at S352.

This sequence belongs to the class-I aminoacyl-tRNA synthetase family. Homodimer. Interacts with oxidized form of GAPDH. Proteolytic cleavage generates 2 forms; T1-TrpRS and T2-TrpRS.

It is found in the cytoplasm. It catalyses the reaction tRNA(Trp) + L-tryptophan + ATP = L-tryptophyl-tRNA(Trp) + AMP + diphosphate + H(+). Catalyzes the attachment of tryptophan to tRNA(Trp) in a two-step reaction: tryptophan is first activated by ATP to form Trp-AMP and then transferred to the acceptor end of the tRNA(Trp). Could also possess an angiostatic activity. This chain is Tryptophan--tRNA ligase, cytoplasmic (WARS1), found in Pongo abelii (Sumatran orangutan).